The sequence spans 190 residues: uncharacterized protein (190 aa).

Residues 1–55 (MSRLRRFNRKILSLSSDYTHDGESDQEDVSILPLDTEEQEELIQKFETNAHITNK) are Cytoplasmic-facing. Residues 56-76 (LYINLLSILYLLYGGLLMILV) form a helical membrane-spanning segment. Over 77–80 (RKSR) the chain is Extracellular. Residues 81 to 101 (GYIKLALLAGANSLICSCITL) traverse the membrane as a helical segment. The Cytoplasmic portion of the chain corresponds to 102–123 (RYDIVNDYLLFKKFKLRVSNFS). The helical transmembrane segment at 124 to 144 (INIINIILLVLMAWISFNHVV) threads the bilayer. Topologically, residues 145 to 149 (EDKKT) are extracellular. A helical transmembrane segment spans residues 150 to 170 (VLCLQVPMFLFWVAVLVKRWA). At 171 to 190 (RNIEDEIADLRCLKYKYKNA) the chain is on the cytoplasmic side.

It is found in the membrane. This is an uncharacterized protein from Saccharomyces cerevisiae (strain ATCC 204508 / S288c) (Baker's yeast).